The following is a 141-amino-acid chain: HTH-type transcriptional regulator LrpA (141 aa).

The HTH asnC-type domain maps to 2-63; that stretch reads IDERDKIILE…RINPKKLGYS (62 aa). A DNA-binding region (H-T-H motif) is located at residues 21-40; it reads FTEIAKKLGISETAVRKRVK.

In terms of assembly, homooctamer; tetramer of dimers.

Functionally, DNA-binding protein that negatively regulates its own transcription. Interferes with RNA polymerase (RNAP) recruitment by inhibiting the association of RNAP with the TBP-TFB promoter complex. This is HTH-type transcriptional regulator LrpA (lrpA) from Pyrococcus horikoshii (strain ATCC 700860 / DSM 12428 / JCM 9974 / NBRC 100139 / OT-3).